Consider the following 225-residue polypeptide: Venom allergen 5 (225 aa).

Residues 1–23 (MKISGFVYLILITTIINLSFSEA) form the signal peptide. Intrachain disulfides connect cysteine 27/cysteine 39, cysteine 31/cysteine 124, cysteine 49/cysteine 117, and cysteine 191/cysteine 208. One can recognise an SCP domain in the interval 69–210 (KQHNEFRQKV…WHRHYLVCNY (142 aa)).

It belongs to the CRISP family. Venom allergen 5-like subfamily. As to expression, expressed by the venom gland.

Its subcellular location is the secreted. The protein is Venom allergen 5 of Vespa magnifica (Hornet).